Reading from the N-terminus, the 457-residue chain is Multidrug resistance protein MdtK (457 aa).

Transmembrane regions (helical) follow at residues 11-31 (LLALAIPVIFAQIAQTSMGVV), 53-73 (IWLPAILFGHGLLLALTPVIA), 93-113 (VLAGLVSVLIMLVLWNAGYII), 127-147 (AVNYLRALLWGAPGYLFFQVM), 160-180 (GMAMGFIGLLVNIPVNYIFIY), 188-208 (LGGVGCGVATASVYWVMFFCM), 243-263 (MPVALALFFEVTLFAVVALLV), 276-296 (IALNFSSLMFVLPMSMSAAVT), 316-336 (RTGIIVGICLAVLTALFTVVF), 357-377 (LMLLAAIYQISDSIQVIGSGV), 387-407 (IFFITFIAYWVLGLPSGYILG), and 418-438 (PAGFWFGFILGLTSAAIMMMW).

It belongs to the multi antimicrobial extrusion (MATE) (TC 2.A.66.1) family. MdtK subfamily.

It is found in the cell inner membrane. Functionally, multidrug efflux pump that functions probably as a Na(+)/drug antiporter. The polypeptide is Multidrug resistance protein MdtK (Cronobacter sakazakii (strain ATCC BAA-894) (Enterobacter sakazakii)).